The primary structure comprises 227 residues: ATP-dependent dethiobiotin synthetase BioD (227 aa).

Asp-12–His-17 provides a ligand contact to ATP. Thr-16 contributes to the Mg(2+) binding site. The active site involves Lys-37. Ser-41 contacts substrate. ATP contacts are provided by residues Asp-54, Glu-116–Gly-119, Asn-176–Gln-177, and Pro-205–Ser-207. Mg(2+) contacts are provided by Asp-54 and Glu-116.

Belongs to the dethiobiotin synthetase family. As to quaternary structure, homodimer. The cofactor is Mg(2+).

The protein resides in the cytoplasm. It carries out the reaction (7R,8S)-7,8-diammoniononanoate + CO2 + ATP = (4R,5S)-dethiobiotin + ADP + phosphate + 3 H(+). It participates in cofactor biosynthesis; biotin biosynthesis; biotin from 7,8-diaminononanoate: step 1/2. Its function is as follows. Catalyzes a mechanistically unusual reaction, the ATP-dependent insertion of CO2 between the N7 and N8 nitrogen atoms of 7,8-diaminopelargonic acid (DAPA, also called 7,8-diammoniononanoate) to form a ureido ring. The chain is ATP-dependent dethiobiotin synthetase BioD from Pseudoalteromonas translucida (strain TAC 125).